A 121-amino-acid polypeptide reads, in one-letter code: Transposase InsC for insertion element IS2A (121 aa).

This sequence belongs to the transposase 8 family.

Functionally, involved in the transposition of the insertion sequence IS2. This is Transposase InsC for insertion element IS2A (insC1) from Escherichia coli (strain K12).